The following is a 601-amino-acid chain: Elongation factor 4 (601 aa).

The tr-type G domain occupies 5 to 187 (SNIRNFAIIA…AIVTKLPSPN (183 aa)). GTP is bound by residues 17-22 (DHGKST) and 134-137 (NKID).

The protein belongs to the TRAFAC class translation factor GTPase superfamily. Classic translation factor GTPase family. LepA subfamily.

The protein resides in the cell inner membrane. It catalyses the reaction GTP + H2O = GDP + phosphate + H(+). Functionally, required for accurate and efficient protein synthesis under certain stress conditions. May act as a fidelity factor of the translation reaction, by catalyzing a one-codon backward translocation of tRNAs on improperly translocated ribosomes. Back-translocation proceeds from a post-translocation (POST) complex to a pre-translocation (PRE) complex, thus giving elongation factor G a second chance to translocate the tRNAs correctly. Binds to ribosomes in a GTP-dependent manner. In Orientia tsutsugamushi (strain Ikeda) (Rickettsia tsutsugamushi), this protein is Elongation factor 4.